Reading from the N-terminus, the 251-residue chain is tRNA (guanine-N(7)-)-methyltransferase (251 aa).

Residues E80, E105, D132, and D155 each coordinate S-adenosyl-L-methionine. D155 is an active-site residue. Substrate-binding positions include K159, D191, and 228–231 (TKFE).

The protein belongs to the class I-like SAM-binding methyltransferase superfamily. TrmB family.

The enzyme catalyses guanosine(46) in tRNA + S-adenosyl-L-methionine = N(7)-methylguanosine(46) in tRNA + S-adenosyl-L-homocysteine. The protein operates within tRNA modification; N(7)-methylguanine-tRNA biosynthesis. Catalyzes the formation of N(7)-methylguanine at position 46 (m7G46) in tRNA. The sequence is that of tRNA (guanine-N(7)-)-methyltransferase from Histophilus somni (strain 129Pt) (Haemophilus somnus).